The following is a 253-amino-acid chain: MSAYGHGRHEHGQNFLTNHKIINSIIDLVKQTSGPIIEIGPGSGALTHPMAHLGRAITAVEVDAKLAAKITQETSSAAVEVVHDDFLNFRLPATPCVIVGNIPFHLTTAILRKLLHAPAWTDAVLLMQWEVARRRAGVGASTMMTAQWSPWFTFHLGSRVPRSAFRPQPNVDGGILVIRRVGDPKIPIEQRKAFQAMVHTVFTARGRGIGEILRRQGCFHHVQKHNHGCAREESTPRPYLPDCTPTTGSISSR.

S-adenosyl-L-methionine contacts are provided by asparagine 14, leucine 16, glycine 40, glutamate 61, aspartate 85, and asparagine 101. The tract at residues 229 to 253 (CAREESTPRPYLPDCTPTTGSISSR) is disordered. The span at 244–253 (TPTTGSISSR) shows a compositional bias: polar residues.

Belongs to the class I-like SAM-binding methyltransferase superfamily. rRNA adenine N(6)-methyltransferase family.

In terms of biological role, involved in erythromycin resistance. This Corynebacterium diphtheriae protein is rRNA adenine N-6-methyltransferase (ermA).